The sequence spans 108 residues: Phosphoribosyl-ATP pyrophosphatase (108 aa).

The protein belongs to the PRA-PH family.

It localises to the cytoplasm. The catalysed reaction is 1-(5-phospho-beta-D-ribosyl)-ATP + H2O = 1-(5-phospho-beta-D-ribosyl)-5'-AMP + diphosphate + H(+). The protein operates within amino-acid biosynthesis; L-histidine biosynthesis; L-histidine from 5-phospho-alpha-D-ribose 1-diphosphate: step 2/9. The sequence is that of Phosphoribosyl-ATP pyrophosphatase from Aromatoleum aromaticum (strain DSM 19018 / LMG 30748 / EbN1) (Azoarcus sp. (strain EbN1)).